Reading from the N-terminus, the 1581-residue chain is Pentafunctional AROM polypeptide (1581 aa).

Residues 1 to 384 form a 3-dehydroquinate synthase region; sequence MPEPTKISIL…YEPKASVVPN (384 aa). Residues 44 to 46, 81 to 84, 114 to 116, and aspartate 119 each bind NAD(+); these read DTN, EVSK, and GGV. Residue arginine 130 participates in 7-phospho-2-dehydro-3-deoxy-D-arabino-heptonate binding. 139-140 is an NAD(+) binding site; it reads TT. 2 residues coordinate 7-phospho-2-dehydro-3-deoxy-D-arabino-heptonate: aspartate 146 and lysine 152. Position 161 (lysine 161) interacts with NAD(+). Asparagine 162 lines the 7-phospho-2-dehydro-3-deoxy-D-arabino-heptonate pocket. Residues 179 to 182 and asparagine 190 contribute to the NAD(+) site; that span reads FLET. Residue glutamate 194 participates in Zn(2+) binding. 7-phospho-2-dehydro-3-deoxy-D-arabino-heptonate contacts are provided by residues 194–197 and lysine 250; that span reads EVIK. Glutamate 260 acts as the Proton acceptor; for 3-dehydroquinate synthase activity in catalysis. Residues 264-268 and histidine 271 each bind 7-phospho-2-dehydro-3-deoxy-D-arabino-heptonate; that span reads RNLLN. Zn(2+) is bound at residue histidine 271. Histidine 275 serves as the catalytic Proton acceptor; for 3-dehydroquinate synthase activity. 7-phospho-2-dehydro-3-deoxy-D-arabino-heptonate is bound by residues histidine 287 and lysine 356. Histidine 287 contacts Zn(2+). Residues 397–842 are EPSP synthase; that stretch reads VHPGVPKESN…WDTLRQLFSV (446 aa). The For EPSP synthase activity role is filled by cysteine 824. Residues 864–1056 form a shikimate kinase region; sequence SASVFIIGMR…KQKKHSFFVS (193 aa). 871-878 contributes to the ATP binding site; it reads GMRGAGKT. The segment at 1057-1277 is 3-dehydroquinase; sequence LTLPDLRSAS…AAPGQLSATE (221 aa). Histidine 1180 (proton acceptor; for 3-dehydroquinate dehydratase activity) is an active-site residue. Lysine 1208 (schiff-base intermediate with substrate; for 3-dehydroquinate dehydratase activity) is an active-site residue. The shikimate dehydrogenase stretch occupies residues 1290-1581; that stretch reads KKRFAIFGNP…ARTAVLGDSA (292 aa).

It in the N-terminal section; belongs to the sugar phosphate cyclases superfamily. Dehydroquinate synthase family. In the 2nd section; belongs to the EPSP synthase family. This sequence in the 3rd section; belongs to the shikimate kinase family. The protein in the 4th section; belongs to the type-I 3-dehydroquinase family. It in the C-terminal section; belongs to the shikimate dehydrogenase family. Homodimer. Requires Zn(2+) as cofactor.

It localises to the cytoplasm. It carries out the reaction 7-phospho-2-dehydro-3-deoxy-D-arabino-heptonate = 3-dehydroquinate + phosphate. It catalyses the reaction 3-dehydroquinate = 3-dehydroshikimate + H2O. The catalysed reaction is shikimate + NADP(+) = 3-dehydroshikimate + NADPH + H(+). The enzyme catalyses shikimate + ATP = 3-phosphoshikimate + ADP + H(+). It carries out the reaction 3-phosphoshikimate + phosphoenolpyruvate = 5-O-(1-carboxyvinyl)-3-phosphoshikimate + phosphate. It participates in metabolic intermediate biosynthesis; chorismate biosynthesis; chorismate from D-erythrose 4-phosphate and phosphoenolpyruvate: step 2/7. The protein operates within metabolic intermediate biosynthesis; chorismate biosynthesis; chorismate from D-erythrose 4-phosphate and phosphoenolpyruvate: step 3/7. Its pathway is metabolic intermediate biosynthesis; chorismate biosynthesis; chorismate from D-erythrose 4-phosphate and phosphoenolpyruvate: step 4/7. It functions in the pathway metabolic intermediate biosynthesis; chorismate biosynthesis; chorismate from D-erythrose 4-phosphate and phosphoenolpyruvate: step 5/7. It participates in metabolic intermediate biosynthesis; chorismate biosynthesis; chorismate from D-erythrose 4-phosphate and phosphoenolpyruvate: step 6/7. Its function is as follows. The AROM polypeptide catalyzes 5 consecutive enzymatic reactions in prechorismate polyaromatic amino acid biosynthesis. This is Pentafunctional AROM polypeptide from Aspergillus terreus (strain NIH 2624 / FGSC A1156).